Here is a 502-residue protein sequence, read N- to C-terminus: Cytochrome P450 83A1 (502 aa).

The helical transmembrane segment at 1 to 21 threads the bilayer; it reads MEDIIIGVVALAAVLLFFLYQ. Residue C442 coordinates heme.

Belongs to the cytochrome P450 family. Requires heme as cofactor.

It is found in the endoplasmic reticulum membrane. It carries out the reaction an (E)-omega-(methylsulfanyl)-alkanal oxime + glutathione + reduced [NADPH--hemoprotein reductase] + O2 = an S-[(1E)-1-(hydroxyimino)-omega-(methylsulfanyl)alkyl]-L-glutathione + oxidized [NADPH--hemoprotein reductase] + 2 H2O + H(+). Functionally, involved in the metabolism of aliphatic and aromatic oximes. Involved in the biosynthesis of both short-chain and long-chain aliphatic glucosinolates. The polypeptide is Cytochrome P450 83A1 (CYP83A1) (Arabidopsis thaliana (Mouse-ear cress)).